The following is a 1343-amino-acid chain: DNA-directed RNA polymerase subunit beta (1343 aa).

Belongs to the RNA polymerase beta chain family. As to quaternary structure, the RNAP catalytic core consists of 2 alpha, 1 beta, 1 beta' and 1 omega subunit. When a sigma factor is associated with the core the holoenzyme is formed, which can initiate transcription.

It carries out the reaction RNA(n) + a ribonucleoside 5'-triphosphate = RNA(n+1) + diphosphate. Its function is as follows. DNA-dependent RNA polymerase catalyzes the transcription of DNA into RNA using the four ribonucleoside triphosphates as substrates. The sequence is that of DNA-directed RNA polymerase subunit beta from Shewanella sediminis (strain HAW-EB3).